Reading from the N-terminus, the 383-residue chain is Serine protease 23 (383 aa).

An N-terminal signal peptide occupies residues 1–23 (MAGIPGLLILLLVLLCVFMQVSP). An N-linked (GlcNAc...) asparagine glycan is attached at asparagine 93. A disulfide bridge connects residues cysteine 160 and cysteine 176. Catalysis depends on histidine 175, which acts as the Charge relay system. Residue asparagine 207 is glycosylated (N-linked (GlcNAc...) asparagine). Active-site charge relay system residues include aspartate 240 and serine 316.

It belongs to the peptidase S1 family.

Its subcellular location is the secreted. The polypeptide is Serine protease 23 (Prss23) (Rattus norvegicus (Rat)).